Consider the following 1464-residue polypeptide: Collagen alpha-1(III) chain (1464 aa).

The first 23 residues, M1–A23, serve as a signal peptide directing secretion. A propeptide spans Q24 to P154 (N-terminal propeptide). The region spanning L31 to P90 is the VWFC domain. The tract at residues P97–C1195 is disordered. Over residues P100–K109 the composition is skewed to low complexity. A compositionally biased stretch (polar residues) spans T147–F156. Residues Q155–G169 are nonhelical region (N-terminal). A compositionally biased stretch (gly residues) spans G164–G173. Positions G170 to C1195 are triple-helical region. Residues P174–P184 are compositionally biased toward pro residues. Residues S186 to Y198 are compositionally biased toward low complexity. The span at K228–E240 shows a compositional bias: basic and acidic residues. K262 is modified (5-hydroxylysine; alternate). Residue K262 is glycosylated (O-linked (Gal...) hydroxylysine; alternate). Positions R265–E276 are enriched in basic and acidic residues. K283 is modified (5-hydroxylysine). 2 stretches are compositionally biased toward low complexity: residues P310–N321 and P354–Q379. Positions G389–G398 are enriched in gly residues. A compositionally biased stretch (low complexity) spans P399–R412. Positions G527–G548 are enriched in gly residues. The segment covering P606–P615 has biased composition (low complexity). Composition is skewed to gly residues over residues G641 to G650 and G668 to G677. The span at A678–P691 shows a compositional bias: low complexity. The span at G692–P708 shows a compositional bias: gly residues. Over residues A717 to P727 the composition is skewed to low complexity. A compositionally biased stretch (basic and acidic residues) spans A822–E834. The residue at position 859 (K859) is a 5-hydroxylysine. Gly residues predominate over residues G863–L879. The segment covering P889–P906 has biased composition (pro residues). Low complexity-rich tracts occupy residues A907 to P934 and P945 to P960. 5-hydroxylysine is present on K976. Positions P1045–V1054 are enriched in pro residues. The segment covering P1068–P1084 has biased composition (low complexity). A 5-hydroxylysine mark is found at K1093 and K1105. Low complexity predominate over residues P1120–P1132. Residues P1180–P1192 are compositionally biased toward pro residues. Positions D1220–L1464 are cleaved as a propeptide — C-terminal propeptide. A Fibrillar collagen NC1 domain is found at E1230 to L1464. Cystine bridges form between C1260/C1292, C1300/C1462, and C1370/C1415. Positions 1278, 1280, 1281, 1283, and 1286 each coordinate Ca(2+).

It belongs to the fibrillar collagen family. In terms of assembly, trimers of identical alpha 1(III) chains. The chains are linked to each other by interchain disulfide bonds. Trimers are also cross-linked via hydroxylysines. Interacts with ADGRG1. Post-translationally, proline residues at the third position of the tripeptide repeating unit (G-X-Y) are hydroxylated in some or all of the chains. In terms of processing, O-linked glycan consists of a Glc-Gal disaccharide bound to the oxygen atom of a post-translationally added hydroxyl group. In terms of tissue distribution, expressed in embryonic brain, specifically in the meninges, pial basement membrane and blood vessels (at protein level).

It localises to the secreted. Its subcellular location is the extracellular space. It is found in the extracellular matrix. Functionally, collagen type III occurs in most soft connective tissues along with type I collagen. Involved in regulation of cortical development. Is the major ligand of ADGRG1 in the developing brain and binding to ADGRG1 inhibits neuronal migration and activates the RhoA pathway by coupling ADGRG1 to GNA13 and possibly GNA12. This Mus musculus (Mouse) protein is Collagen alpha-1(III) chain (Col3a1).